A 242-amino-acid chain; its full sequence is Pyridoxine 5'-phosphate synthase (242 aa).

Asparagine 6 lines the 3-amino-2-oxopropyl phosphate pocket. 8 to 9 (DH) serves as a coordination point for 1-deoxy-D-xylulose 5-phosphate. Arginine 17 serves as a coordination point for 3-amino-2-oxopropyl phosphate. Histidine 42 functions as the Proton acceptor in the catalytic mechanism. 1-deoxy-D-xylulose 5-phosphate is bound by residues arginine 44 and histidine 49. The active-site Proton acceptor is glutamate 69. Residue threonine 99 participates in 1-deoxy-D-xylulose 5-phosphate binding. The active-site Proton donor is the histidine 190. Residues glycine 191 and 212 to 213 (GH) contribute to the 3-amino-2-oxopropyl phosphate site.

It belongs to the PNP synthase family. As to quaternary structure, homooctamer; tetramer of dimers.

Its subcellular location is the cytoplasm. The catalysed reaction is 3-amino-2-oxopropyl phosphate + 1-deoxy-D-xylulose 5-phosphate = pyridoxine 5'-phosphate + phosphate + 2 H2O + H(+). It participates in cofactor biosynthesis; pyridoxine 5'-phosphate biosynthesis; pyridoxine 5'-phosphate from D-erythrose 4-phosphate: step 5/5. In terms of biological role, catalyzes the complicated ring closure reaction between the two acyclic compounds 1-deoxy-D-xylulose-5-phosphate (DXP) and 3-amino-2-oxopropyl phosphate (1-amino-acetone-3-phosphate or AAP) to form pyridoxine 5'-phosphate (PNP) and inorganic phosphate. The chain is Pyridoxine 5'-phosphate synthase from Neisseria meningitidis serogroup A / serotype 4A (strain DSM 15465 / Z2491).